Reading from the N-terminus, the 684-residue chain is Calpain-14 (684 aa).

The 294-residue stretch at 43-336 (LFEDTSFPAT…FVLLVICKLT (294 aa)) folds into the Calpain catalytic domain. Catalysis depends on residues Cys101, His254, and Asn278. The domain III stretch occupies residues 337 to 503 (PGLLSQEAAQ…KHIFYEIGSN (167 aa)). Residues 504–517 (SGVVFSKEIEDQNE) form a linker region. The domain IV stretch occupies residues 518 to 683 (RQDEFFTKFF…KPEWMMMALY (166 aa)). 3 EF-hand domains span residues 557-592 (FSLE…LKLS), 586-621 (WKQL…AGIM), and 651-684 (LRVE…ALYS). Residues Asp570, Asn572, Ser574, Thr576, and Glu581 each contribute to the Ca(2+) site.

It belongs to the peptidase C2 family. As to expression, not expressed in tissues tested.

Its function is as follows. Calcium-regulated non-lysosomal thiol-protease. This chain is Calpain-14 (CAPN14), found in Homo sapiens (Human).